A 444-amino-acid polypeptide reads, in one-letter code: Methylenetetrahydrofolate--tRNA-(uracil-5-)-methyltransferase TrmFO (444 aa).

Position 10 to 15 (10 to 15 (GAGLAG)) interacts with FAD.

The protein belongs to the MnmG family. TrmFO subfamily. FAD is required as a cofactor.

It is found in the cytoplasm. The catalysed reaction is uridine(54) in tRNA + (6R)-5,10-methylene-5,6,7,8-tetrahydrofolate + NADH + H(+) = 5-methyluridine(54) in tRNA + (6S)-5,6,7,8-tetrahydrofolate + NAD(+). It carries out the reaction uridine(54) in tRNA + (6R)-5,10-methylene-5,6,7,8-tetrahydrofolate + NADPH + H(+) = 5-methyluridine(54) in tRNA + (6S)-5,6,7,8-tetrahydrofolate + NADP(+). Catalyzes the folate-dependent formation of 5-methyl-uridine at position 54 (M-5-U54) in all tRNAs. The sequence is that of Methylenetetrahydrofolate--tRNA-(uracil-5-)-methyltransferase TrmFO from Streptococcus agalactiae serotype Ia (strain ATCC 27591 / A909 / CDC SS700).